The following is a 232-amino-acid chain: Ornithine carbamoyltransferase (232 aa).

Residues Q15, R39, and 66 to 69 (HPTQ) each bind carbamoyl phosphate. Residues N99, D163, and 167-168 (SM) each bind L-ornithine. Carbamoyl phosphate contacts are provided by residues 204-207 (HCLP) and T232.

This sequence belongs to the aspartate/ornithine carbamoyltransferase superfamily. OTCase family.

The protein localises to the cytoplasm. The catalysed reaction is carbamoyl phosphate + L-ornithine = L-citrulline + phosphate + H(+). It functions in the pathway amino-acid biosynthesis; L-arginine biosynthesis; L-arginine from L-ornithine and carbamoyl phosphate: step 1/3. Reversibly catalyzes the transfer of the carbamoyl group from carbamoyl phosphate (CP) to the N(epsilon) atom of ornithine (ORN) to produce L-citrulline. This Neisseria perflava protein is Ornithine carbamoyltransferase (argF).